The primary structure comprises 289 residues: MASGKEIKTKIASVQSTQKITKAMEMVATSKMRKTQDRMAASRPYSETIRNVISHVSKASIGYKHPFLVEREVKKVGMLVISTDRGMCGGLNINLFKTVLNEIKKWKEQGITVEVGVIGSKGIAFFRSLGLKIRAQHSGMGDNPSVEELLGIANDMFDAYKDGKIDALYLAHNQFINTMSQKPSFAQLVPLPELDTDNLGERQQAWDYIYEPDPKMLLDSLLTRYLESQVYQSVVDNLASEQAARMVAMKAATDNAGNLINDLQLVYNKARQASITNELNEIVAGAAAI.

This sequence belongs to the ATPase gamma chain family. F-type ATPases have 2 components, CF(1) - the catalytic core - and CF(0) - the membrane proton channel. CF(1) has five subunits: alpha(3), beta(3), gamma(1), delta(1), epsilon(1). CF(0) has three main subunits: a, b and c.

The protein localises to the cell inner membrane. In terms of biological role, produces ATP from ADP in the presence of a proton gradient across the membrane. The gamma chain is believed to be important in regulating ATPase activity and the flow of protons through the CF(0) complex. This is ATP synthase gamma chain from Mannheimia succiniciproducens (strain KCTC 0769BP / MBEL55E).